The primary structure comprises 107 residues: uncharacterized protein (107 aa).

This is an uncharacterized protein from Escherichia coli (strain K12).